A 927-amino-acid polypeptide reads, in one-letter code: Probable dipeptidyl-aminopeptidase B (927 aa).

2 disordered regions span residues 1-44 and 58-101; these read MAPA…TTSI and GHFE…KNDG. Residues 1 to 108 are Cytoplasmic-facing; it reads MAPAPGMAPY…NDGMNRGMRR (108 aa). Basic and acidic residues-rich tracts occupy residues 19–36 and 58–70; these read HRPE…HESE and GHFE…PMKE. The helical; Signal-anchor for type II membrane protein transmembrane segment at 109–129 threads the bilayer; the sequence is TLIIVAGLLISAWVVGLFFYV. Over 130 to 927 the chain is Vacuolar; sequence SHKSYKPASQ…RSIQPILPIL (798 aa). 2 N-linked (GlcNAc...) asparagine glycosylation sites follow: Asn365 and Asn530. The active-site Charge relay system is the Ser769. The N-linked (GlcNAc...) asparagine glycan is linked to Asn828. Residues Asp846 and His879 each act as charge relay system in the active site.

Belongs to the peptidase S9B family.

The protein resides in the vacuole membrane. It catalyses the reaction Release of an N-terminal dipeptide, Xaa-Yaa-|-Zaa-, from a polypeptide, preferentially when Yaa is Pro, provided Zaa is neither Pro nor hydroxyproline.. In terms of biological role, type IV dipeptidyl-peptidase which removes N-terminal dipeptides sequentially from polypeptides having unsubstituted N-termini provided that the penultimate residue is proline. In Podospora anserina (strain S / ATCC MYA-4624 / DSM 980 / FGSC 10383) (Pleurage anserina), this protein is Probable dipeptidyl-aminopeptidase B (DAPB).